The following is a 265-amino-acid chain: Small ribosomal subunit protein eS4 (265 aa).

Residues 42 to 104 form the S4 RNA-binding domain; the sequence is LPLILIIRNR…TGENYRLLYD (63 aa).

The protein belongs to the eukaryotic ribosomal protein eS4 family.

The protein localises to the cytoplasm. The chain is Small ribosomal subunit protein eS4 (RPS4) from Oryza sativa subsp. japonica (Rice).